Reading from the N-terminus, the 340-residue chain is Heat-inducible transcription repressor HrcA (340 aa).

Belongs to the HrcA family.

Functionally, negative regulator of class I heat shock genes (grpE-dnaK-dnaJ and groELS operons). Prevents heat-shock induction of these operons. This is Heat-inducible transcription repressor HrcA from Burkholderia mallei (strain NCTC 10247).